Reading from the N-terminus, the 144-residue chain is Small ribosomal subunit protein eS10A (144 aa).

The disordered stretch occupies residues 90–144 (THKRQVRPTAPRAGRPEPRERASADAGYRRAEKKDEGAAPSGFAPSFRGGFGRPQ). Residues 103 to 126 (GRPEPRERASADAGYRRAEKKDEG) are compositionally biased toward basic and acidic residues.

This sequence belongs to the eukaryotic ribosomal protein eS10 family. Component of the small ribosomal subunit (SSU). Mature yeast ribosomes consist of a small (40S) and a large (60S) subunit. The 40S small subunit contains 1 molecule of ribosomal RNA (18S rRNA) and at least 33 different proteins. The large 60S subunit contains 3 rRNA molecules (25S, 5.8S and 5S rRNA) and at least 46 different proteins. eS10 interacts with GCN1 (via middle region); this interaction is direct and promotes GCN2 kinase activity.

It localises to the cytoplasm. In terms of biological role, component of the ribosome, a large ribonucleoprotein complex responsible for the synthesis of proteins in the cell. The small ribosomal subunit (SSU) binds messenger RNAs (mRNAs) and translates the encoded message by selecting cognate aminoacyl-transfer RNA (tRNA) molecules. The large subunit (LSU) contains the ribosomal catalytic site termed the peptidyl transferase center (PTC), which catalyzes the formation of peptide bonds, thereby polymerizing the amino acids delivered by tRNAs into a polypeptide chain. The nascent polypeptides leave the ribosome through a tunnel in the LSU and interact with protein factors that function in enzymatic processing, targeting, and the membrane insertion of nascent chains at the exit of the ribosomal tunnel. eS10 plays a role as a positive regulator of the GCN2 kinase activity by stimulating GCN1-mediated GCN2 activation. The polypeptide is Small ribosomal subunit protein eS10A (rps1001) (Schizosaccharomyces pombe (strain 972 / ATCC 24843) (Fission yeast)).